The sequence spans 261 residues: MICOS complex subunit Mic25 (261 aa).

G2 is lipidated: N-myristoyl glycine. 3 positions are modified to phosphoserine: S13, S31, and S33. Disordered stretches follow at residues 39–59 (KDCSQPSAGEQLAPGPGPECS), 81–114 (CGPAEGTYKAPQGDFKVSRAENSDGQQSSAVKED), and 140–165 (TEKHLKASLPKKKATHEQQQSDRLTR). Residues 109–202 (SAVKEDLKKF…AELYKLSSQQ (94 aa)) are a coiled coil. Residues 154–165 (THEQQQSDRLTR) show a composition bias toward basic and acidic residues. A CHCH domain is found at 220–261 (EPVCSGLQAQILRCYRDHLHEVLLCSDLAKAYQHCVSTARKG). 2 short sequence motifs (cx9C motif) span residues 223–233 (CSGLQAQILRC) and 244–254 (CSDLAKAYQHC). 2 disulfide bridges follow: C223-C254 and C233-C244.

It belongs to the MICOS complex subunit Mic19 family. Metazoan Mic25 subfamily. As to quaternary structure, component of the mitochondrial contact site and cristae organizing system (MICOS) complex, composed of at least MICOS10/MIC10, CHCHD3/MIC19, CHCHD6/MIC25, APOOL/MIC27, IMMT/MIC60, APOO/MIC23/MIC26 and MICOS13/MIC13. This complex was also known under the names MINOS or MitOS complex. The MICOS complex associates with mitochondrial outer membrane proteins SAMM50, MTX1 and MTX2 (together described as components of the mitochondrial outer membrane sorting assembly machinery (SAM) complex) and DNAJC11, mitochondrial inner membrane protein TMEM11 and with HSPA9. The MICOS and SAM complexes together with DNAJC11 are part of a large protein complex spanning both membranes termed the mitochondrial intermembrane space bridging (MIB) complex. Interacts with DISC1. Interacts with IMMT/MIC60.

It localises to the mitochondrion inner membrane. The protein localises to the mitochondrion. Functionally, component of the MICOS complex, a large protein complex of the mitochondrial inner membrane that plays crucial roles in the maintenance of crista junctions, inner membrane architecture, and formation of contact sites to the outer membrane. The chain is MICOS complex subunit Mic25 (Chchd6) from Rattus norvegicus (Rat).